A 508-amino-acid chain; its full sequence is Pyruvate kinase 2 (508 aa).

Residue arginine 50 coordinates substrate. Residues asparagine 52, serine 54, aspartate 85, and threonine 86 each contribute to the K(+) site. 52-55 (NFSH) serves as a coordination point for ATP. Residues arginine 92 and lysine 178 each coordinate ATP. Residue glutamate 243 coordinates Mg(2+). The substrate site is built by glycine 266, aspartate 267, and threonine 299. Position 267 (aspartate 267) interacts with Mg(2+).

It belongs to the pyruvate kinase family. Homotetramer. Mg(2+) is required as a cofactor. K(+) serves as cofactor.

The enzyme catalyses pyruvate + ATP = phosphoenolpyruvate + ADP + H(+). It functions in the pathway carbohydrate degradation; glycolysis; pyruvate from D-glyceraldehyde 3-phosphate: step 5/5. This is Pyruvate kinase 2 (PYK2) from Candida glabrata (strain ATCC 2001 / BCRC 20586 / JCM 3761 / NBRC 0622 / NRRL Y-65 / CBS 138) (Yeast).